The following is a 477-amino-acid chain: Minor capsid protein (477 aa).

This sequence belongs to the closteroviridae minor capsid protein family.

The protein resides in the virion. In terms of biological role, minor capsid protein that encapsidates the 5'-terminal portion of the viral genome. The sequence is that of Minor capsid protein from Vitis vinifera (Grape).